The sequence spans 310 residues: Ribosomal RNA small subunit methyltransferase H (310 aa).

Residues 32–34 (GGH), aspartate 52, alanine 83, aspartate 100, and glutamine 107 each bind S-adenosyl-L-methionine.

This sequence belongs to the methyltransferase superfamily. RsmH family.

It localises to the cytoplasm. The catalysed reaction is cytidine(1402) in 16S rRNA + S-adenosyl-L-methionine = N(4)-methylcytidine(1402) in 16S rRNA + S-adenosyl-L-homocysteine + H(+). Specifically methylates the N4 position of cytidine in position 1402 (C1402) of 16S rRNA. In Geobacillus sp. (strain WCH70), this protein is Ribosomal RNA small subunit methyltransferase H.